Consider the following 416-residue polypeptide: Adenylosuccinate synthetase (416 aa).

GTP contacts are provided by residues 13–19 and 41–43; these read GDEGKGK and GHT. Asp14 acts as the Proton acceptor in catalysis. 2 residues coordinate Mg(2+): Asp14 and Gly41. IMP contacts are provided by residues 14–17, 39–42, Thr126, Arg140, Gln220, Thr235, and Arg299; these read DEGK and NAGH. The active-site Proton donor is His42. Residue 295-301 participates in substrate binding; sequence TTTGRKR. Residues Arg301, 327 to 329, and 405 to 407 each bind GTP; these read KLD and STS.

The protein belongs to the adenylosuccinate synthetase family. Homodimer. Mg(2+) is required as a cofactor.

The protein localises to the cytoplasm. The catalysed reaction is IMP + L-aspartate + GTP = N(6)-(1,2-dicarboxyethyl)-AMP + GDP + phosphate + 2 H(+). The protein operates within purine metabolism; AMP biosynthesis via de novo pathway; AMP from IMP: step 1/2. In terms of biological role, plays an important role in the de novo pathway of purine nucleotide biosynthesis. Catalyzes the first committed step in the biosynthesis of AMP from IMP. The polypeptide is Adenylosuccinate synthetase (Campylobacter hominis (strain ATCC BAA-381 / DSM 21671 / CCUG 45161 / LMG 19568 / NCTC 13146 / CH001A)).